Reading from the N-terminus, the 622-residue chain is Pyranose 2-oxidase (622 aa).

A signal peptide spans 1-28 (MSASSSDPFHSFAKTSFTSKAAKRATAH). Positions 29-37 (SLPPLPGPG) are excised as a propeptide. H167 carries the tele-8alpha-FAD histidine modification. Q449 and H451 together coordinate substrate. H546 (proton acceptor) is an active-site residue. N591 is a catalytic residue.

It belongs to the GMC oxidoreductase family. In terms of assembly, homotetramer. The cofactor is FAD.

The protein localises to the periplasm. The enzyme catalyses D-glucose + O2 = 2-dehydro-D-glucose + H2O2. Its function is as follows. Catalyzes the oxidation of various aldopyranoses and disaccharides on carbon-2 to the corresponding 2-keto sugars concomitant with the reduction of O(2) to H(2)O(2). Plays an important role in lignin degradation of wood rot fungi by supplying the essential cosubstrate H(2)O(2) for the ligninolytic peroxidases, lignin peroxidase and manganese-dependent peroxidase. The preferred substrate is D-glucose which is converted to 2-dehydro-D-glucose, an intermediate of a secondary metabolic pathway leading to the antibiotic cortalcerone. Also acts on D-xylose, together with D-glucose the major sugars derived from wood, on L-sorbose, D-galactose and 1,5-anhydroglucitol, a diagnostic marker of diabetes mellitus. This chain is Pyranose 2-oxidase (P2OX), found in Trametes hirsuta (White-rot fungus).